We begin with the raw amino-acid sequence, 103 residues long: Histone H4 (103 aa).

Gly residues predominate over residues 1-14 (MSGRGKGGKGLGKG). Residues 1-20 (MSGRGKGGKGLGKGGAKRHR) are disordered. S2 bears the N-acetylserine mark. 2 positions are modified to N6-acetyl-N6-methyllysine; alternate: K6 and K13. The residue at position 17 (K17) is an N6-acetyllysine. A DNA-binding region spans residues 17-21 (KRHRK). K21 bears the N6-methyllysine mark.

Belongs to the histone H4 family. The nucleosome is a histone octamer containing two molecules each of H2A, H2B, H3 and H4 assembled in one H3-H4 heterotetramer and two H2A-H2B heterodimers. The octamer wraps approximately 147 bp of DNA.

It localises to the nucleus. Its subcellular location is the chromosome. In terms of biological role, core component of nucleosome. Nucleosomes wrap and compact DNA into chromatin, limiting DNA accessibility to the cellular machineries which require DNA as a template. Histones thereby play a central role in transcription regulation, DNA repair, DNA replication and chromosomal stability. DNA accessibility is regulated via a complex set of post-translational modifications of histones, also called histone code, and nucleosome remodeling. This is Histone H4 from Holothuria tubulosa (Tubular sea cucumber).